Reading from the N-terminus, the 271-residue chain is Thiazole synthase (271 aa).

Lys-95 acts as the Schiff-base intermediate with DXP in catalysis. 1-deoxy-D-xylulose 5-phosphate contacts are provided by residues Gly-156, 182 to 183 (AG), and 204 to 205 (NT).

It belongs to the ThiG family. In terms of assembly, homotetramer. Forms heterodimers with either ThiH or ThiS.

It localises to the cytoplasm. The catalysed reaction is [ThiS sulfur-carrier protein]-C-terminal-Gly-aminoethanethioate + 2-iminoacetate + 1-deoxy-D-xylulose 5-phosphate = [ThiS sulfur-carrier protein]-C-terminal Gly-Gly + 2-[(2R,5Z)-2-carboxy-4-methylthiazol-5(2H)-ylidene]ethyl phosphate + 2 H2O + H(+). It functions in the pathway cofactor biosynthesis; thiamine diphosphate biosynthesis. Functionally, catalyzes the rearrangement of 1-deoxy-D-xylulose 5-phosphate (DXP) to produce the thiazole phosphate moiety of thiamine. Sulfur is provided by the thiocarboxylate moiety of the carrier protein ThiS. In vitro, sulfur can be provided by H(2)S. The polypeptide is Thiazole synthase (Yersinia pestis).